The sequence spans 260 residues: Indole-3-glycerol phosphate synthase (260 aa).

The protein belongs to the TrpC family.

The enzyme catalyses 1-(2-carboxyphenylamino)-1-deoxy-D-ribulose 5-phosphate + H(+) = (1S,2R)-1-C-(indol-3-yl)glycerol 3-phosphate + CO2 + H2O. It functions in the pathway amino-acid biosynthesis; L-tryptophan biosynthesis; L-tryptophan from chorismate: step 4/5. This is Indole-3-glycerol phosphate synthase from Staphylococcus aureus (strain MRSA252).